The following is a 216-amino-acid chain: Transmembrane emp24 domain-containing protein eca (216 aa).

The N-terminal stretch at 1–20 (MRDQILSLALLLCVLHSACG) is a signal peptide. Over 21-182 (LYFHISETER…FRHTSESTNS (162 aa)) the chain is Lumenal. The GOLD domain maps to 30-126 (RKCFIEEVPD…QLRVHLDIQV (97 aa)). Residues 134-164 (ANVAQKEKLTELQLRIRQLLDQVEQITKEQN) adopt a coiled-coil conformation. The chain crosses the membrane as a helical span at residues 183 to 203 (RVLWWSLAQTVVLVCMGFWQM). Residues 204–216 (RHLKSFFEAKKLV) lie on the Cytoplasmic side of the membrane. Positions 213-216 (KKLV) match the Prevents secretion from ER motif.

The protein belongs to the EMP24/GP25L family.

The protein resides in the endoplasmic reticulum membrane. In terms of biological role, eca and bai are essential, though not redundant, for dorsoventral patterning of the embryo. Specifically required during early embryogenesis for the activity of maternal tkv, while the zygotic tkv is not affected. Involved in Golgi organization. In Drosophila ananassae (Fruit fly), this protein is Transmembrane emp24 domain-containing protein eca.